The sequence spans 207 residues: Dephospho-CoA kinase (207 aa).

The 200-residue stretch at 4–203 folds into the DPCK domain; that stretch reads VIGLTGGIAS…EEGYIEKPNY (200 aa). 12–17 lines the ATP pocket; the sequence is ASGKST.

The protein belongs to the CoaE family.

It localises to the cytoplasm. The catalysed reaction is 3'-dephospho-CoA + ATP = ADP + CoA + H(+). Its pathway is cofactor biosynthesis; coenzyme A biosynthesis; CoA from (R)-pantothenate: step 5/5. Functionally, catalyzes the phosphorylation of the 3'-hydroxyl group of dephosphocoenzyme A to form coenzyme A. The sequence is that of Dephospho-CoA kinase from Staphylococcus aureus (strain MRSA252).